The following is a 1076-amino-acid chain: Protein EXPORTIN 1B (1076 aa).

Positions 37–103 constitute an Importin N-terminal domain; it reads ADNILRDLKA…KNYISDVIVQ (67 aa). HEAT repeat units follow at residues 135 to 171, 232 to 267, 282 to 319, 475 to 514, 564 to 601, 613 to 650, 683 to 720, 757 to 794, 799 to 836, 895 to 935, and 943 to 988; these read AKWKSFIPDLVIAAKTSETICENCMAILKLLSEEVFD, IFESPLLEILLKFFPVPAYRNLTLQCLSEVASLNFG, MNQLQAILPLNLNIPEAYSTGSSEEQAFIQNLALFFTS, DTEKQMLSKLSKQLSGEEWAWNNLNTLCWAIGSISGSMVV, KFLKTVVHKLFEFMHETHPGVQDMACDTFLKIVQKCKR, PFVSELLSGLATIVGDLQPHQIHTFYESVGSMIQAESD, LKEPDVIRTVLNILQTNTRVATSLGTFFLSQISLIFLD, REILKLIETFLDKAENQPHIGKQFVPPMMDQVLGDYAR, ARESEVLSLFATIINKYKVVMRDEVPLIFEAVFQCTLE, ETGL…VLTD, and KLHV…YTTK.

It belongs to the exportin family. As to expression, present in mature pollen grains, unpollinated pistils, and 2-week-old seedlings.

Its subcellular location is the nucleus. The protein localises to the nuclear pore complex. The protein resides in the nucleus membrane. Its function is as follows. Receptor for the leucine-rich nuclear export signal (NES). Binds cooperatively to the NES on its target protein and to the small GTPase Ran in its active GTP-bound form. Required for the maternal-to-embryonic transition and during gametophyte development. In Arabidopsis thaliana (Mouse-ear cress), this protein is Protein EXPORTIN 1B.